Here is a 373-residue protein sequence, read N- to C-terminus: 3-isopropylmalate dehydrogenase (373 aa).

82–93 (GPKWGTGTVRPE) is a binding site for NAD(+). Arg-100, Arg-110, Arg-139, and Asp-231 together coordinate substrate. The Mg(2+) site is built by Asp-231, Asp-256, and Asp-260. 295–306 (GSAPDLPANKVN) contacts NAD(+).

Belongs to the isocitrate and isopropylmalate dehydrogenases family. Homodimer. Mg(2+) serves as cofactor. Requires Mn(2+) as cofactor.

The protein resides in the cytoplasm. It catalyses the reaction (2R,3S)-3-isopropylmalate + NAD(+) = 4-methyl-2-oxopentanoate + CO2 + NADH. It functions in the pathway amino-acid biosynthesis; L-leucine biosynthesis; L-leucine from 3-methyl-2-oxobutanoate: step 3/4. Its function is as follows. Catalyzes the oxidation of 3-carboxy-2-hydroxy-4-methylpentanoate (3-isopropylmalate) to 3-carboxy-4-methyl-2-oxopentanoate. The product decarboxylates to 4-methyl-2 oxopentanoate. The chain is 3-isopropylmalate dehydrogenase (LEU2) from Candida albicans (Yeast).